Consider the following 118-residue polypeptide: Large ribosomal subunit protein bL20 (118 aa).

Belongs to the bacterial ribosomal protein bL20 family.

Functionally, binds directly to 23S ribosomal RNA and is necessary for the in vitro assembly process of the 50S ribosomal subunit. It is not involved in the protein synthesizing functions of that subunit. The sequence is that of Large ribosomal subunit protein bL20 from Staphylococcus epidermidis (strain ATCC 35984 / DSM 28319 / BCRC 17069 / CCUG 31568 / BM 3577 / RP62A).